The chain runs to 218 residues: Glycerol-3-phosphate acyltransferase (218 aa).

Helical transmembrane passes span Ile-4 to Ile-24, Thr-54 to Tyr-74, Pro-80 to Phe-100, Gly-107 to Met-127, and Trp-130 to Ile-150.

The protein belongs to the PlsY family. As to quaternary structure, probably interacts with PlsX.

Its subcellular location is the cell inner membrane. It carries out the reaction an acyl phosphate + sn-glycerol 3-phosphate = a 1-acyl-sn-glycero-3-phosphate + phosphate. It functions in the pathway lipid metabolism; phospholipid metabolism. Functionally, catalyzes the transfer of an acyl group from acyl-phosphate (acyl-PO(4)) to glycerol-3-phosphate (G3P) to form lysophosphatidic acid (LPA). This enzyme utilizes acyl-phosphate as fatty acyl donor, but not acyl-CoA or acyl-ACP. The polypeptide is Glycerol-3-phosphate acyltransferase (Photorhabdus laumondii subsp. laumondii (strain DSM 15139 / CIP 105565 / TT01) (Photorhabdus luminescens subsp. laumondii)).